A 96-amino-acid polypeptide reads, in one-letter code: Co-chaperonin GroES (96 aa).

Belongs to the GroES chaperonin family. As to quaternary structure, heptamer of 7 subunits arranged in a ring. Interacts with the chaperonin GroEL.

Its subcellular location is the cytoplasm. Functionally, together with the chaperonin GroEL, plays an essential role in assisting protein folding. The GroEL-GroES system forms a nano-cage that allows encapsulation of the non-native substrate proteins and provides a physical environment optimized to promote and accelerate protein folding. GroES binds to the apical surface of the GroEL ring, thereby capping the opening of the GroEL channel. In Solidesulfovibrio magneticus (strain ATCC 700980 / DSM 13731 / RS-1) (Desulfovibrio magneticus), this protein is Co-chaperonin GroES.